We begin with the raw amino-acid sequence, 310 residues long: Acetylglutamate kinase (310 aa).

Substrate-binding positions include 70-71 (GG), Arg-92, and Asn-191.

It belongs to the acetylglutamate kinase family. ArgB subfamily.

The protein resides in the cytoplasm. It catalyses the reaction N-acetyl-L-glutamate + ATP = N-acetyl-L-glutamyl 5-phosphate + ADP. It functions in the pathway amino-acid biosynthesis; L-arginine biosynthesis; N(2)-acetyl-L-ornithine from L-glutamate: step 2/4. Functionally, catalyzes the ATP-dependent phosphorylation of N-acetyl-L-glutamate. The polypeptide is Acetylglutamate kinase (Corynebacterium diphtheriae (strain ATCC 700971 / NCTC 13129 / Biotype gravis)).